The primary structure comprises 218 residues: Copper acquisition factor BIM1 (218 aa).

Positions 1 to 19 are cleaved as a signal peptide; that stretch reads MFALKFILITSFIASTALA. His20 and His65 together coordinate Cu(2+). Intrachain disulfides connect Cys40–Cys144 and Cys110–Cys161. 3 N-linked (GlcNAc...) asparagine glycosylation sites follow: Asn87, Asn91, and Asn124. Asp138 provides a ligand contact to Cu(2+). Residues Asn158 and Asn170 are each glycosylated (N-linked (GlcNAc...) asparagine). The tract at residues 160-194 is disordered; that stretch reads TCTDDASRTSNASSTSSGSATATSAAATSSSSGTS. Residues 167-194 are compositionally biased toward low complexity; that stretch reads RTSNASSTSSGSATATSAAATSSSSGTS. Ser190 carries GPI-anchor amidated serine lipidation. The propeptide at 191–218 is removed in mature form; sequence SGTSGAIKEVVGLGALSLALGIAGLIIL.

It belongs to the X325 family. The cofactor is Cu(2+).

Its subcellular location is the cell membrane. Lytic polysaccharide monooxygenase-like protein that has diverged to biological functions other than polysaccharide degradation since it does not perform oxidative cleavage of polysaccharides. Cell surface-bound protein that functions in the copper-accumulation pathway shared by the CUF1-dependent copper transporter CTR1. Involved in maintaining cell wall integrity during copper deficiency. Binds Cu(2+) with an estimated 1:1 stoichiometry and might serve as an extracellular copper ligand. FRE4 and FRE7 metalloreductases probably function together with CTR1 and BIM1 to liberate the Cu(2+) bound to the BIM1 copper-binding site for subsequent import of Cu(+) into the cell by CTR1, via the reduction of BIM1-bound Cu(2+) to Cu(+) to reduce binding affinity for BIM1 but increase affinity for CTR1. Facilitates copper acquisition in the brain of mammalian hosts and acts as a copper-dependent virulence trait in fungal meningitis. While BIM1 plays a critical role in cryptococcal meningitis, at least in part through its role in copper acquisition, it could play additional roles during copper limitation or as a means to invade and colonize host tissues in the brain, by compromising host carbohydrate integrity via its lytic polysaccharide monooxygenase (LPMO) activity, which has still to be determined. The chain is Copper acquisition factor BIM1 from Cryptococcus neoformans var. neoformans serotype D (strain JEC21 / ATCC MYA-565) (Filobasidiella neoformans).